A 300-amino-acid chain; its full sequence is Glycerol-3-phosphate dehydrogenase [NAD(P)+] (300 aa).

Positions 11, 33, and 79 each coordinate NADPH. Sn-glycerol 3-phosphate contacts are provided by Lys79, Gly107, and Ser109. Residue Ala111 participates in NADPH binding. Sn-glycerol 3-phosphate-binding residues include Lys161, Asp214, Ser224, Arg225, and Asn226. Catalysis depends on Lys161, which acts as the Proton acceptor. Arg225 contributes to the NADPH binding site. The NADPH site is built by Val249 and Glu251.

This sequence belongs to the NAD-dependent glycerol-3-phosphate dehydrogenase family.

Its subcellular location is the cytoplasm. The enzyme catalyses sn-glycerol 3-phosphate + NAD(+) = dihydroxyacetone phosphate + NADH + H(+). It carries out the reaction sn-glycerol 3-phosphate + NADP(+) = dihydroxyacetone phosphate + NADPH + H(+). It participates in membrane lipid metabolism; glycerophospholipid metabolism. Catalyzes the reduction of the glycolytic intermediate dihydroxyacetone phosphate (DHAP) to sn-glycerol 3-phosphate (G3P), the key precursor for phospholipid synthesis. The chain is Glycerol-3-phosphate dehydrogenase [NAD(P)+] from Campylobacter lari (strain RM2100 / D67 / ATCC BAA-1060).